Consider the following 77-residue polypeptide: Small ribosomal subunit protein uS17 (77 aa).

Belongs to the universal ribosomal protein uS17 family. Part of the 30S ribosomal subunit.

In terms of biological role, one of the primary rRNA binding proteins, it binds specifically to the 5'-end of 16S ribosomal RNA. This chain is Small ribosomal subunit protein uS17, found in Rickettsia prowazekii (strain Madrid E).